The chain runs to 608 residues: 65-kDa microtubule-associated protein 6 (608 aa).

Coiled coils occupy residues 164–186 (DLTL…EKSD), 368–388 (ELLA…QSRK), and 467–503 (VRLV…LLTQ). Residues 501-565 (LTQRESIYGS…RSYSGHHRQN (65 aa)) form a disordered region. Low complexity predominate over residues 510 to 523 (SKPSPRRSSSFRKP). S513 carries the post-translational modification Phosphoserine. Residues 526–535 (FNISNGNGSV) are compositionally biased toward polar residues. At S604 the chain carries Phosphoserine.

Belongs to the MAP65/ASE1 family. Forms a dimer. Binds to polymerized centrally located endocytic MT.

It localises to the nucleus. The protein localises to the cytoplasm. The protein resides in the mitochondrion. It is found in the cytoskeleton. Its subcellular location is the phragmoplast. In terms of biological role, microtubule-associated protein that mediates the formation of a mesh-like stable and dense network formed by individual microtubules (MT). Confers MT resistance to high concentration of NaCl. The polypeptide is 65-kDa microtubule-associated protein 6 (MAP65-6) (Arabidopsis thaliana (Mouse-ear cress)).